The following is a 406-amino-acid chain: tRNA-specific 2-thiouridylase MnmA (406 aa).

Residues Gly-42 to Ser-49 and Leu-68 contribute to the ATP site. Catalysis depends on Cys-129, which acts as the Nucleophile. A disulfide bond links Cys-129 and Cys-237. Residue Gly-154 participates in ATP binding. Residues Lys-187–Gln-189 form an interaction with tRNA region. Cys-237 functions as the Cysteine persulfide intermediate in the catalytic mechanism. An interaction with tRNA region spans residues Arg-342 to Tyr-343.

This sequence belongs to the MnmA/TRMU family.

Its subcellular location is the cytoplasm. The catalysed reaction is S-sulfanyl-L-cysteinyl-[protein] + uridine(34) in tRNA + AH2 + ATP = 2-thiouridine(34) in tRNA + L-cysteinyl-[protein] + A + AMP + diphosphate + H(+). Functionally, catalyzes the 2-thiolation of uridine at the wobble position (U34) of tRNA, leading to the formation of s(2)U34. The chain is tRNA-specific 2-thiouridylase MnmA from Prochlorococcus marinus (strain MIT 9211).